The following is a 598-amino-acid chain: Probable translation initiation factor IF-2 (598 aa).

One can recognise a tr-type G domain in the interval 3-225; it reads LRCPIVSVLG…GLAQKFLEQK (223 aa). A G1 region spans residues 12-19; sequence GHVDHGKT. Residue 12 to 19 coordinates GTP; the sequence is GHVDHGKT. A G2 region spans residues 37-41; that stretch reads GITQH. The segment at 76–79 is G3; it reads DTPG. GTP is bound by residues 76–80 and 130–133; these read DTPGH and NKVD. The tract at residues 130–133 is G4; that stretch reads NKVD. The G5 stretch occupies residues 200 to 202; the sequence is SAM.

This sequence belongs to the TRAFAC class translation factor GTPase superfamily. Classic translation factor GTPase family. IF-2 subfamily.

Functionally, function in general translation initiation by promoting the binding of the formylmethionine-tRNA to ribosomes. Seems to function along with eIF-2. In Methanococcus maripaludis (strain C7 / ATCC BAA-1331), this protein is Probable translation initiation factor IF-2.